The sequence spans 424 residues: Gamma-glutamyl phosphate reductase (424 aa).

Positions 1 to 27 (MSVEAQSRSGAVDTQEPADLREQVHSA) are disordered.

Belongs to the gamma-glutamyl phosphate reductase family.

It localises to the cytoplasm. The enzyme catalyses L-glutamate 5-semialdehyde + phosphate + NADP(+) = L-glutamyl 5-phosphate + NADPH + H(+). It participates in amino-acid biosynthesis; L-proline biosynthesis; L-glutamate 5-semialdehyde from L-glutamate: step 2/2. Catalyzes the NADPH-dependent reduction of L-glutamate 5-phosphate into L-glutamate 5-semialdehyde and phosphate. The product spontaneously undergoes cyclization to form 1-pyrroline-5-carboxylate. In Mycolicibacterium smegmatis (strain ATCC 700084 / mc(2)155) (Mycobacterium smegmatis), this protein is Gamma-glutamyl phosphate reductase.